The following is a 488-amino-acid chain: H2.0-like homeobox protein (488 aa).

Disordered regions lie at residues 118–173 (AYHH…SSKD) and 331–488 (WRHS…LGCL). 2 stretches are compositionally biased toward low complexity: residues 125-135 (QQQQQQQQPQQ) and 158-171 (PNPHHSGSAPAPSS). The segment at residues 276 to 335 (RSWSRAVFSNLQRKGLEKRFEIQKYVTKPDRKQLAAMLGLTDAQVKVWFQNRRMKWRHSK) is a DNA-binding region (homeobox). Basic and acidic residues-rich tracts occupy residues 334–349 (SKEAQAQKDKDKEAGE) and 363–372 (DERSPSRSEG). Over residues 373–383 (EAESESSDSES) the composition is skewed to acidic residues. Basic and acidic residues predominate over residues 390-401 (DTERTEGSERSL). Residues 422 to 432 (GSGGSSGGGGN) show a composition bias toward gly residues. The span at 433–454 (SFSFSSASSLSSSSTSAGCASS) shows a compositional bias: low complexity.

It belongs to the H2.0 homeobox family. Low level in normal B and T-cells, high level in activated lymphocytes and monocytes. Also found in thymus, tonsil, bone marrow, developing vessels, and fetal brain.

The protein localises to the nucleus. In terms of biological role, transcription factor required for TBX21/T-bet-dependent maturation of Th1 cells as well as maintenance of Th1-specific gene expression. Involved in embryogenesis and hematopoiesis. This chain is H2.0-like homeobox protein (HLX), found in Homo sapiens (Human).